The primary structure comprises 180 residues: NADH-quinone oxidoreductase subunit I (180 aa).

2 4Fe-4S ferredoxin-type domains span residues 48–80 and 90–119; these read IVLT…LQKA and EFFR…LTPD. Positions 60, 63, 66, 70, 99, 102, 105, and 109 each coordinate [4Fe-4S] cluster. Positions 160–180 are disordered; the sequence is GKPKGSAQKEAAPIDVKSILP.

This sequence belongs to the complex I 23 kDa subunit family. In terms of assembly, NDH-1 is composed of 14 different subunits. Subunits NuoA, H, J, K, L, M, N constitute the membrane sector of the complex. [4Fe-4S] cluster serves as cofactor.

It is found in the cell inner membrane. The catalysed reaction is a quinone + NADH + 5 H(+)(in) = a quinol + NAD(+) + 4 H(+)(out). Functionally, NDH-1 shuttles electrons from NADH, via FMN and iron-sulfur (Fe-S) centers, to quinones in the respiratory chain. The immediate electron acceptor for the enzyme in this species is believed to be ubiquinone. Couples the redox reaction to proton translocation (for every two electrons transferred, four hydrogen ions are translocated across the cytoplasmic membrane), and thus conserves the redox energy in a proton gradient. The protein is NADH-quinone oxidoreductase subunit I of Tolumonas auensis (strain DSM 9187 / NBRC 110442 / TA 4).